The chain runs to 349 residues: ATPase GET3 (349 aa).

Lys-27–Thr-34 serves as a coordination point for ATP. The active site involves Asp-58. The ATP site is built by Glu-240 and Asn-267. Zn(2+) contacts are provided by Cys-280 and Cys-283.

The protein belongs to the arsA ATPase family. Homodimer. Component of the Golgi to ER traffic (GET) complex, which is composed of GET1, GET2 and GET3. Within the complex, GET1 and GET2 form a heterotetramer which is stabilized by phosphatidylinositol binding and which binds to the GET3 homodimer. Interacts with the chloride channel protein GEF1.

The protein localises to the cytoplasm. It is found in the endoplasmic reticulum. Its subcellular location is the golgi apparatus. In terms of biological role, ATPase required for the post-translational delivery of tail-anchored (TA) proteins to the endoplasmic reticulum. Recognizes and selectively binds the transmembrane domain of TA proteins in the cytosol. This complex then targets to the endoplasmic reticulum by membrane-bound receptors GET1 and GET2, where the tail-anchored protein is released for insertion. This process is regulated by ATP binding and hydrolysis. ATP binding drives the homodimer towards the closed dimer state, facilitating recognition of newly synthesized TA membrane proteins. ATP hydrolysis is required for insertion. Subsequently, the homodimer reverts towards the open dimer state, lowering its affinity for the GET1-GET2 receptor, and returning it to the cytosol to initiate a new round of targeting. Cooperates with the HDEL receptor ERD2 to mediate the ATP-dependent retrieval of resident ER proteins that contain a C-terminal H-D-E-L retention signal from the Golgi to the ER. Involved in low-level resistance to the oxyanions arsenite and arsenate, and in heat tolerance. The sequence is that of ATPase GET3 from Eremothecium gossypii (strain ATCC 10895 / CBS 109.51 / FGSC 9923 / NRRL Y-1056) (Yeast).